Reading from the N-terminus, the 225-residue chain is UPF0758 protein Sputw3181_0338 (225 aa).

The 123-residue stretch at 102 to 224 (VLTNPDLTRD…IVSFAERGWI (123 aa)) folds into the MPN domain. H173, H175, and D186 together coordinate Zn(2+). Residues 173–186 (HNHPSGIAEPSQAD) carry the JAMM motif motif.

Belongs to the UPF0758 family.

The polypeptide is UPF0758 protein Sputw3181_0338 (Shewanella sp. (strain W3-18-1)).